The primary structure comprises 93 residues: Co-chaperonin GroES (93 aa).

Belongs to the GroES chaperonin family. As to quaternary structure, heptamer of 7 subunits arranged in a ring. Interacts with the chaperonin GroEL.

It localises to the cytoplasm. Functionally, together with the chaperonin GroEL, plays an essential role in assisting protein folding. The GroEL-GroES system forms a nano-cage that allows encapsulation of the non-native substrate proteins and provides a physical environment optimized to promote and accelerate protein folding. GroES binds to the apical surface of the GroEL ring, thereby capping the opening of the GroEL channel. The sequence is that of Co-chaperonin GroES from Geobacillus kaustophilus (strain HTA426).